Here is a 116-residue protein sequence, read N- to C-terminus: MRVKTGVVRRRRHKKVLKLARGFYSGRRKHFRKAKEQLERSMYYAFRDRKQKKRDFRSLWVVRINAACRMHNTSYSRFMHALKVANIELDRKVLADMAMNDMQAFTSVLESVKEHL.

The protein belongs to the bacterial ribosomal protein bL20 family.

In terms of biological role, binds directly to 23S ribosomal RNA and is necessary for the in vitro assembly process of the 50S ribosomal subunit. It is not involved in the protein synthesizing functions of that subunit. This chain is Large ribosomal subunit protein bL20, found in Helicobacter pylori (strain G27).